We begin with the raw amino-acid sequence, 129 residues long: Small ribosomal subunit protein eS8 (129 aa).

The interval 1-29 (MSVWQGRSRRKPTGGLYRPARKKRKYEMG) is disordered.

It belongs to the eukaryotic ribosomal protein eS8 family. As to quaternary structure, part of the 30S ribosomal subunit.

The polypeptide is Small ribosomal subunit protein eS8 (rps8e) (Methanocaldococcus jannaschii (strain ATCC 43067 / DSM 2661 / JAL-1 / JCM 10045 / NBRC 100440) (Methanococcus jannaschii)).